The following is a 542-amino-acid chain: CTP synthase (542 aa).

The amidoligase domain stretch occupies residues 1 to 265 (MTRFIFITGG…DTQVLKFFGM (265 aa)). A CTP-binding site is contributed by serine 13. Serine 13 contributes to the UTP binding site. Residue 14–19 (SLGKGL) participates in ATP binding. Tyrosine 54 provides a ligand contact to L-glutamine. Aspartate 71 serves as a coordination point for ATP. Residues aspartate 71 and glutamate 139 each coordinate Mg(2+). CTP-binding positions include 146 to 148 (DIE), 186 to 191 (KTKPTQ), and lysine 222. UTP contacts are provided by residues 186–191 (KTKPTQ) and lysine 222. The 251-residue stretch at 291–541 (TIAVVGKYTS…IRAAIEQSRL (251 aa)) folds into the Glutamine amidotransferase type-1 domain. Glycine 353 serves as a coordination point for L-glutamine. The active-site Nucleophile; for glutamine hydrolysis is the cysteine 380. Residues 381 to 384 (FGMQ), glutamate 404, and arginine 469 contribute to the L-glutamine site. Active-site residues include histidine 514 and glutamate 516.

Belongs to the CTP synthase family. In terms of assembly, homotetramer.

The catalysed reaction is UTP + L-glutamine + ATP + H2O = CTP + L-glutamate + ADP + phosphate + 2 H(+). The enzyme catalyses L-glutamine + H2O = L-glutamate + NH4(+). It carries out the reaction UTP + NH4(+) + ATP = CTP + ADP + phosphate + 2 H(+). Its pathway is pyrimidine metabolism; CTP biosynthesis via de novo pathway; CTP from UDP: step 2/2. Allosterically activated by GTP, when glutamine is the substrate; GTP has no effect on the reaction when ammonia is the substrate. The allosteric effector GTP functions by stabilizing the protein conformation that binds the tetrahedral intermediate(s) formed during glutamine hydrolysis. Inhibited by the product CTP, via allosteric rather than competitive inhibition. Functionally, catalyzes the ATP-dependent amination of UTP to CTP with either L-glutamine or ammonia as the source of nitrogen. Regulates intracellular CTP levels through interactions with the four ribonucleotide triphosphates. The sequence is that of CTP synthase from Rhodospirillum centenum (strain ATCC 51521 / SW).